Here is an 824-residue protein sequence, read N- to C-terminus: MSISSLFGGRYDNKFLLNMSSAPKIELIVDKVASLSERRLEGRLPEDWFRHIMDPETEFNSEFADALCIGIDEFAQPLPFLPFKALLVTGTAGAGKTNSIQTLAANLDCIVTATTSIAAQNLSVVLNRSKSAQVKTIFKTFGFNSSHVSMSERQSYIANDERSIQIQQKQDLSIYWNVISDIADRALGAVACKTKELPDLCESSVIVIDEAGVILRHILHTVVFFYWFYNALYKTPLYEDGIVPCIVCVGSPTQSNALVTSFNPLTQNKDVKRGIDVLSALICDDVLSKYCEVDNNWIIFVNNKRCADHAFGDFLKHIEFGLPLKPELIEYVDQFVKPASYIRNPMNEIETTRLFLSHNEVKNYFRSLHEQVEVTNRNNLFVFPVYFLIKNKTFEDYKSEIGNFSLEIEPWFKSNIHRLNTYSQFADQDLSKTVQLEEIVLEDGSVEETLITCHLKHIRNSSIGVTSKIKASTVGFSGTYEKFVELLQSDLFIEKTSCDQTIHAYSFLSGLMFGGMYSFCCSKFTTPEVLMEIKNIKMPSIEFLESEMSRMSPDVQTVETDERYDFGLVNDGLSDVDLLEIDPCGDPFFTRYSKLPLTNSLSFEEISLLYTTFKDIFISRFAILQKHTKGKFGKTLLVTYNRNNVSRKQCGEIYSHLKSFYGMLTYAIPANNYTLEGYTNDNVVHLGTDKQLPQILYKKGLPRLVIKDEMGFISVLDNNVSKFIDVVNGQSFHLCTTVDYATVSKVSMTITKSQGLSIQKVAIDFGSDPKNLKLSSIYVGMSRVTDPNNLIMNVNPLRLNYENDNFIAPHIVKALKNENTMLIF.

90–97 (GTAGAGKT) is an ATP binding site.

Belongs to the herpesviridae helicase family. In terms of assembly, associates with the primase and the primase-associated factor to form the helicase-primase complex.

It localises to the host nucleus. In terms of biological role, component of the helicase/primase complex. Unwinds the DNA at the replication forks and generates single-stranded DNA for both leading and lagging strand synthesis. The primase synthesizes short RNA primers on the lagging strand that the polymerase elongates using dNTPs. Possesses helicase-like motifs and therefore may act as the helicase subunit of the complex. In Human herpesvirus 6A (strain Uganda-1102) (HHV-6 variant A), this protein is DNA replication helicase.